A 342-amino-acid chain; its full sequence is Ferredoxin--NADP reductase (342 aa).

Residues C17, D36, Q44, Y49, V89, F124, D289, and T330 each contribute to the FAD site.

It belongs to the ferredoxin--NADP reductase type 2 family. As to quaternary structure, homodimer. The cofactor is FAD.

The catalysed reaction is 2 reduced [2Fe-2S]-[ferredoxin] + NADP(+) + H(+) = 2 oxidized [2Fe-2S]-[ferredoxin] + NADPH. In Nitrobacter winogradskyi (strain ATCC 25391 / DSM 10237 / CIP 104748 / NCIMB 11846 / Nb-255), this protein is Ferredoxin--NADP reductase.